A 242-amino-acid polypeptide reads, in one-letter code: Neuromodulin (242 aa).

The segment at 1-242 (MLCCMRRTKQ…EEREADQEHA (242 aa)) is disordered. Residues C3 and C4 are each lipidated (S-palmitoyl cysteine). Over residues 9-32 (KQVEKNDEDQKIEQDGIKPEDKAH) the composition is skewed to basic and acidic residues. An IQ domain is found at 31-60 (AHKAATKIQASFRGHITRKKLKGEKKGDAQ). S41 carries the phosphoserine; by PHK and PKC modification. 2 stretches are compositionally biased toward basic and acidic residues: residues 66-84 (GNEK…KEGE) and 98-117 (KAEE…KGEG). Residues 142–157 (ETESATKASTDNSPSS) show a composition bias toward polar residues. Phosphoserine occurs at positions 154, 156, and 157. The span at 158-170 (KAEDAPAKEEPKQ) shows a compositional bias: basic and acidic residues. Positions 171–203 (ADVPAAVTAAAAATTPAAEDAAAKATAQPPTDA) are enriched in low complexity. T185 is subject to Phosphothreonine. 2 positions are modified to phosphoserine; by CK2: S206 and S207. The span at 209 to 242 (AEEKIEAVDETKPKESARQDEGKGEEREADQEHA) shows a compositional bias: basic and acidic residues.

Belongs to the neuromodulin family. Identified in a complex containing FGFR4, NCAM1, CDH2, PLCG1, FRS2, SRC, SHC1, GAP43 and CTTN. Interacts (via IQ domain) with calmodulin. Binds calmodulin with a greater affinity in the absence of Ca(2+) than in its presence. Phosphorylated. Phosphorylation of this protein by a protein kinase C is specifically correlated with certain forms of synaptic plasticity. Post-translationally, palmitoylated by ZDHHC3. Palmitoylation is regulated by ARF6 and is essential for plasma membrane association and axonal and dendritic filopodia induction. Deacylated by LYPLA2.

The protein resides in the cell membrane. It localises to the cell projection. Its subcellular location is the growth cone membrane. It is found in the synapse. The protein localises to the filopodium membrane. The protein resides in the perikaryon. It localises to the dendrite. Its subcellular location is the axon. It is found in the cytoplasm. Its function is as follows. This protein is associated with nerve growth. It is a major component of the motile 'growth cones' that form the tips of elongating axons. Plays a role in axonal and dendritic filopodia induction. The sequence is that of Neuromodulin (GAP43) from Felis catus (Cat).